A 409-amino-acid polypeptide reads, in one-letter code: tRNA(Met) cytidine acetate ligase (409 aa).

Residues 7 to 20, G102, N169, and R194 contribute to the ATP site; that span reads VVEYNPMHNGHLYH.

Belongs to the TmcAL family.

It is found in the cytoplasm. The enzyme catalyses cytidine(34) in elongator tRNA(Met) + acetate + ATP = N(4)-acetylcytidine(34) in elongator tRNA(Met) + AMP + diphosphate. Its function is as follows. Catalyzes the formation of N(4)-acetylcytidine (ac(4)C) at the wobble position of elongator tRNA(Met), using acetate and ATP as substrates. First activates an acetate ion to form acetyladenylate (Ac-AMP) and then transfers the acetyl group to tRNA to form ac(4)C34. The sequence is that of tRNA(Met) cytidine acetate ligase from Clostridium botulinum (strain Langeland / NCTC 10281 / Type F).